The primary structure comprises 203 residues: Selenocysteine-containing peroxiredoxin PrxU (203 aa).

The 159-residue stretch at 2–160 (VSVGKKAPDF…TLRQIQAFQL (159 aa)) folds into the Thioredoxin domain. Sec47 is an active-site residue. Residue Sec47 is a non-standard amino acid, selenocysteine.

It belongs to the peroxiredoxin family. AhpC/Prx1 subfamily.

The catalysed reaction is a hydroperoxide + [thioredoxin]-dithiol = an alcohol + [thioredoxin]-disulfide + H2O. In terms of biological role, thiol-specific peroxidase that catalyzes the reduction of hydrogen peroxide and organic hydroperoxides to water and alcohols, respectively. Plays a role in cell protection against oxidative stress by detoxifying peroxides. This is Selenocysteine-containing peroxiredoxin PrxU from Peptoclostridium acidaminophilum (Eubacterium acidaminophilum).